The primary structure comprises 720 residues: 1,4-alpha-glucan branching enzyme GlgB (720 aa).

The active-site Nucleophile is the Asp400. Glu453 acts as the Proton donor in catalysis.

This sequence belongs to the glycosyl hydrolase 13 family. GlgB subfamily. Monomer.

The catalysed reaction is Transfers a segment of a (1-&gt;4)-alpha-D-glucan chain to a primary hydroxy group in a similar glucan chain.. It functions in the pathway glycan biosynthesis; glycogen biosynthesis. Its function is as follows. Catalyzes the formation of the alpha-1,6-glucosidic linkages in glycogen by scission of a 1,4-alpha-linked oligosaccharide from growing alpha-1,4-glucan chains and the subsequent attachment of the oligosaccharide to the alpha-1,6 position. The sequence is that of 1,4-alpha-glucan branching enzyme GlgB from Chlamydia pneumoniae (Chlamydophila pneumoniae).